The primary structure comprises 463 residues: Argininosuccinate lyase (463 aa).

The protein belongs to the lyase 1 family. Argininosuccinate lyase subfamily.

Its subcellular location is the cytoplasm. The catalysed reaction is 2-(N(omega)-L-arginino)succinate = fumarate + L-arginine. Its pathway is amino-acid biosynthesis; L-arginine biosynthesis; L-arginine from L-ornithine and carbamoyl phosphate: step 3/3. In Bradyrhizobium sp. (strain BTAi1 / ATCC BAA-1182), this protein is Argininosuccinate lyase.